Consider the following 181-residue polypeptide: Probable toxin TacT (181 aa).

It belongs to the acetyltransferase family. In terms of assembly, forms a complex with cognate antitoxin TacA.

Its function is as follows. Probable toxin component of a type II toxin-antitoxin (TA) system. Might acetylate tRNA and inhibit translation. Should be neutralized by cognate antitoxin TacA (y4aR). This is Probable toxin TacT from Sinorhizobium fredii (strain NBRC 101917 / NGR234).